The following is a 75-amino-acid chain: Mating pheromone Er-1/Er-3 (75 aa).

The N-terminal stretch at 1–19 (MNKLAILAIIAMVLFSANA) is a signal peptide. Positions 20–35 (FRFQSRLRSNVEAKTG) are excised as a propeptide. Cystine bridges form between cysteine 38/cysteine 54, cysteine 45/cysteine 71, and cysteine 50/cysteine 63.

Homodimer.

Its subcellular location is the secreted. It is found in the cell membrane. Its function is as follows. Mating ciliate pheromones (or gamones) are diffusible extracellular communication signals that distinguish different intraspecific classes of cells commonly referred to as 'mating types'. They prepare the latter for conjugation by changing their cell surface properties. The membrane-bound form promotes inter-cellular communication and adhesion for mating pair formation and may act as binding site for the secreted form. The polypeptide is Mating pheromone Er-1/Er-3 (MAT1) (Euplotes raikovi).